Consider the following 146-residue polypeptide: D-aminoacyl-tRNA deacylase (146 aa).

The Gly-cisPro motif, important for rejection of L-amino acids motif lies at 137 to 138 (GP).

The protein belongs to the DTD family. As to quaternary structure, homodimer.

It localises to the cytoplasm. It catalyses the reaction glycyl-tRNA(Ala) + H2O = tRNA(Ala) + glycine + H(+). It carries out the reaction a D-aminoacyl-tRNA + H2O = a tRNA + a D-alpha-amino acid + H(+). In terms of biological role, an aminoacyl-tRNA editing enzyme that deacylates mischarged D-aminoacyl-tRNAs. Also deacylates mischarged glycyl-tRNA(Ala), protecting cells against glycine mischarging by AlaRS. Acts via tRNA-based rather than protein-based catalysis; rejects L-amino acids rather than detecting D-amino acids in the active site. By recycling D-aminoacyl-tRNA to D-amino acids and free tRNA molecules, this enzyme counteracts the toxicity associated with the formation of D-aminoacyl-tRNA entities in vivo and helps enforce protein L-homochirality. The protein is D-aminoacyl-tRNA deacylase of Psychrobacter sp. (strain PRwf-1).